Here is a 325-residue protein sequence, read N- to C-terminus: Undecaprenyl-phosphate 4-deoxy-4-formamido-L-arabinose transferase (325 aa).

The next 2 helical transmembrane spans lie at 235–255 and 269–291; these read LSVV…LLMV and VFTL…GLLG.

The protein belongs to the glycosyltransferase 2 family.

Its subcellular location is the cell inner membrane. It catalyses the reaction UDP-4-deoxy-4-formamido-beta-L-arabinose + di-trans,octa-cis-undecaprenyl phosphate = 4-deoxy-4-formamido-alpha-L-arabinopyranosyl di-trans,octa-cis-undecaprenyl phosphate + UDP. It functions in the pathway glycolipid biosynthesis; 4-amino-4-deoxy-alpha-L-arabinose undecaprenyl phosphate biosynthesis; 4-amino-4-deoxy-alpha-L-arabinose undecaprenyl phosphate from UDP-4-deoxy-4-formamido-beta-L-arabinose and undecaprenyl phosphate: step 1/2. It participates in bacterial outer membrane biogenesis; lipopolysaccharide biosynthesis. Catalyzes the transfer of 4-deoxy-4-formamido-L-arabinose from UDP to undecaprenyl phosphate. The modified arabinose is attached to lipid A and is required for resistance to polymyxin and cationic antimicrobial peptides. Essential for virulence in insects. This chain is Undecaprenyl-phosphate 4-deoxy-4-formamido-L-arabinose transferase, found in Photorhabdus laumondii subsp. laumondii (strain DSM 15139 / CIP 105565 / TT01) (Photorhabdus luminescens subsp. laumondii).